Reading from the N-terminus, the 291-residue chain is Phosphatidylglycerol--prolipoprotein diacylglyceryl transferase (291 aa).

The next 7 helical transmembrane spans lie at 21–41 (VALHWYGLMYLVGFVFAMWLA), 60–80 (LLYAGFLGVFLGGRIGYVLFY), 96–116 (WDGGMSFHGGLIGVILVMIIF), 130–150 (FIAPLIPFGLGAGRLGNFING), 198–218 (SQLYELALEGVVLFIILNLFI), 225–245 (GAVSGLFLIGYGAFRIIVEFF), and 260–280 (ISMGQILSIPMIIAGAIMMVW). R143 contributes to the a 1,2-diacyl-sn-glycero-3-phospho-(1'-sn-glycerol) binding site.

The protein belongs to the Lgt family.

Its subcellular location is the cell inner membrane. The catalysed reaction is L-cysteinyl-[prolipoprotein] + a 1,2-diacyl-sn-glycero-3-phospho-(1'-sn-glycerol) = an S-1,2-diacyl-sn-glyceryl-L-cysteinyl-[prolipoprotein] + sn-glycerol 1-phosphate + H(+). Its pathway is protein modification; lipoprotein biosynthesis (diacylglyceryl transfer). In terms of biological role, catalyzes the transfer of the diacylglyceryl group from phosphatidylglycerol to the sulfhydryl group of the N-terminal cysteine of a prolipoprotein, the first step in the formation of mature lipoproteins. In Salmonella agona (strain SL483), this protein is Phosphatidylglycerol--prolipoprotein diacylglyceryl transferase.